Here is a 92-residue protein sequence, read N- to C-terminus: Small ribosomal subunit protein uS17 (92 aa).

This sequence belongs to the universal ribosomal protein uS17 family. In terms of assembly, part of the 30S ribosomal subunit.

In terms of biological role, one of the primary rRNA binding proteins, it binds specifically to the 5'-end of 16S ribosomal RNA. The chain is Small ribosomal subunit protein uS17 from Cupriavidus necator (strain ATCC 17699 / DSM 428 / KCTC 22496 / NCIMB 10442 / H16 / Stanier 337) (Ralstonia eutropha).